Reading from the N-terminus, the 145-residue chain is Basic phospholipase A2 textilotoxin A chain (145 aa).

The N-terminal stretch at 1–19 (MHPAHLLVLLGVCVSLLGA) is a signal peptide. Residues 20–27 (SDIPPLPL) constitute a propeptide that is removed on maturation. 7 cysteine pairs are disulfide-bonded: C38/C98, C54/C144, C56/C72, C71/C125, C78/C118, C87/C111, and C105/C116. Ca(2+) contacts are provided by Y55, G57, and G59. H75 is an active-site residue. A Ca(2+)-binding site is contributed by D76. D119 is a catalytic residue.

The protein belongs to the phospholipase A2 family. Group I subfamily. D49 sub-subfamily. As to quaternary structure, heterohexamer. 2 forms exist: 2 A or 2 B chains, 2 C chains and 2 covalently-linked D chains, and 1 A or 1 B, 1 C, 2 covalently-linked D chains and 2 differentially glycosylated covalently-linked D chains. Textilotoxin was originally described as pentameric. The cofactor is Ca(2+). Expressed by the venom gland.

The protein resides in the secreted. The enzyme catalyses a 1,2-diacyl-sn-glycero-3-phosphocholine + H2O = a 1-acyl-sn-glycero-3-phosphocholine + a fatty acid + H(+). In terms of biological role, snake venom oligomeric phospholipase A2 that has potent presynaptic neurotoxicity. Chain A possesses a very low toxicity, but is essential for neurotoxicity. Possesses a low enzymatic activity. PLA2 catalyzes the calcium-dependent hydrolysis of the 2-acyl groups in 3-sn-phosphoglycerides. The chain is Basic phospholipase A2 textilotoxin A chain from Pseudonaja textilis (Eastern brown snake).